The following is a 216-amino-acid chain: MALCLKQVFAKDKTFRPRKRFEPGTQRFELYKKAQASLKSGLDLRSVVRLPPGENIDDWIAVHVVDFFNRINLIYGTMAERCSETSCPVMAGGPRYEYRWQDERQYRRPAKLSAPRYMALLMDWIEGLINDEEVFPTRVGVPFPKNFQQVCTKILTRLFRVFVHVYIHHFDSILSMGAEAHVNTCYKHFYYFIREFSLVDQRELEPLREMTERICH.

Zn(2+) contacts are provided by C82, C87, H164, and H169.

The protein belongs to the MOB1/phocein family.

May regulate the activity of kinases. The chain is MOB kinase activator 3C (MOB3C) from Homo sapiens (Human).